Here is a 55-residue protein sequence, read N- to C-terminus: Sec-independent protein translocase protein TatA (55 aa).

Residues 1–21 traverse the membrane as a helical segment; that stretch reads MGMSFSHLLIVLLIIFVLFGA.

The protein belongs to the TatA/E family. As to quaternary structure, the Tat system comprises two distinct complexes: a TatABC complex, containing multiple copies of TatA, TatB and TatC subunits, and a separate TatA complex, containing only TatA subunits. Substrates initially bind to the TatABC complex, which probably triggers association of the separate TatA complex to form the active translocon.

It is found in the cell inner membrane. Part of the twin-arginine translocation (Tat) system that transports large folded proteins containing a characteristic twin-arginine motif in their signal peptide across membranes. TatA could form the protein-conducting channel of the Tat system. This chain is Sec-independent protein translocase protein TatA, found in Rickettsia peacockii (strain Rustic).